Reading from the N-terminus, the 1239-residue chain is Codanin-1 (1239 aa).

Ala2 carries the N-acetylalanine modification. Residues 61–72 are compositionally biased toward polar residues; sequence SRVLPQGPSTPA. Disordered regions lie at residues 61-249 and 261-299; these read SRVL…PPGC and KART…ADPA. Phosphothreonine is present on Thr70. Composition is skewed to low complexity over residues 77 to 88, 95 to 116, and 138 to 179; these read ASAALPARQGAP, ARSQ…PLAR, and GAAE…LSNL. The tract at residues 193–213 is interaction with ASF1A/B; that stretch reads AGRTKPSRRINPTPVSEERSL. Residues 219 to 238 show a composition bias toward polar residues; that stretch reads CFTSPPISCVPSSQPSTLDT. Phosphoserine is present on Ser270. Transmembrane regions (helical) follow at residues 317–337 and 631–651; these read CIAE…LQLL and FAVV…VAFL.

As to quaternary structure, interacts with ASF1A and ASF1B. Found in a cytosolic complex with ASF1A, ASF1B, IPO4 and histones H3.1 and H4. Widely expressed in adult mice, the highest levels can be measured in erythropoietic cells.

It is found in the cytoplasm. Its subcellular location is the nucleus. It localises to the membrane. May act as a negative regulator of ASF1 in chromatin assembly. In Mus musculus (Mouse), this protein is Codanin-1 (Cdan1).